Here is a 104-residue protein sequence, read N- to C-terminus: uncharacterized protein (104 aa).

Positions 51–70 are disordered; that stretch reads NPGRSLDNNKDVSDKGRSEF. The span at 57–70 shows a compositional bias: basic and acidic residues; sequence DNNKDVSDKGRSEF.

It belongs to the protein-tyrosine phosphatase family.

This is an uncharacterized protein from Xanthomonas campestris pv. campestris (strain ATCC 33913 / DSM 3586 / NCPPB 528 / LMG 568 / P 25).